The chain runs to 291 residues: Methylsterol monooxygenase 1 (291 aa).

Helical transmembrane passes span 55 to 75 and 100 to 120; these read LIVH…FQFL and MLLF…YYFT. The Fatty acid hydroxylase domain occupies 145 to 274; the sequence is CAVIEDTWHY…FTWWDRLFDT (130 aa). Positions 157-161 match the Histidine box-1 motif; it reads HRALH. Positions 170–174 match the Histidine box-2 motif; the sequence is HKVHH. The chain crosses the membrane as a helical span at residues 199-219; sequence FFIGTMVFCNHMILLWAWVTF. The Histidine box-3 motif lies at 249–255; sequence FHDFHHM.

This sequence belongs to the sterol desaturase family. The cofactor is Fe cation.

Its subcellular location is the endoplasmic reticulum membrane. The catalysed reaction is 4,4-dimethyl-5alpha-cholest-7-en-3beta-ol + 6 Fe(II)-[cytochrome b5] + 3 O2 + 5 H(+) = 4alpha-carboxy-4beta-methyl-5alpha-cholest-7-ene-3beta-ol + 6 Fe(III)-[cytochrome b5] + 4 H2O. The protein operates within steroid biosynthesis; zymosterol biosynthesis; zymosterol from lanosterol: step 3/6. Functionally, catalyzes the first step in the removal of the two C-4 methyl groups of 4,4-dimethylzymosterol. In Danio rerio (Zebrafish), this protein is Methylsterol monooxygenase 1 (msmo1).